The sequence spans 98 residues: Transcription elongation factor A protein-like 7 (98 aa).

Residues 1–22 (MQKSCNEKEGKPKGSEAKREDE) are compositionally biased toward basic and acidic residues. The disordered stretch occupies residues 1–33 (MQKSCNEKEGKPKGSEAKREDEQPCGALEGQRL). A coiled-coil region spans residues 59-89 (GEEMTGEEEEMERCLEEIRSLRKKFRALHSN).

Belongs to the TFS-II family. TFA subfamily.

Its subcellular location is the nucleus. Functionally, plays a role in the negative regulation of NF-kappa-B signaling at the basal level by modulating transcriptional activity of NF-kappa-B on its target gene promoters. Associates with cyclin D1 promoter containing Myc E-box sequence and transcriptionally represses cyclin D1 expression. Regulates telomerase reverse transcriptase expression and telomerase activity in both ALT (alternative lengthening of telomeres)and telomerase-positive cell lines. In Mus musculus (Mouse), this protein is Transcription elongation factor A protein-like 7 (Tceal7).